The following is a 371-amino-acid chain: DNA replication and repair protein RecF (371 aa).

ATP is bound at residue 30–37 (GANAQGKT).

Belongs to the RecF family.

It is found in the cytoplasm. Functionally, the RecF protein is involved in DNA metabolism; it is required for DNA replication and normal SOS inducibility. RecF binds preferentially to single-stranded, linear DNA. It also seems to bind ATP. This is DNA replication and repair protein RecF from Lacticaseibacillus casei (strain BL23) (Lactobacillus casei).